A 324-amino-acid polypeptide reads, in one-letter code: MSTTENAAIEPVTGADAEVLLAQPRGFCAGVDRAIEIVERALQRFGAPIYVRHEIVHNAYVVSDLRSKGAVFVQELDDVPVGGTVIFSAHGVSRAVRQAAEARGLRVFDATCPLVTKVHVEVSKMRTQGFEIIMIGHKGHPEVEGTMGQADDGMLLVESVDDVARLAVKDPARLAYVTQTTLSVDETQEIVAAIKARFPAVHEPKKQDICYATQNRQDAVKFMAPQVEVVIVVGSPNSSNSNRLRELAEKLGVPAYMVDTPEQVRPEWLAGKRRVGLTAGASAPEELAQSIVDRLRALGARSVRPLDGIQENMSFPLPRGLQIN.

Cys-28 contacts [4Fe-4S] cluster. Residues His-57 and His-90 each contribute to the (2E)-4-hydroxy-3-methylbut-2-enyl diphosphate site. Positions 57 and 90 each coordinate dimethylallyl diphosphate. Isopentenyl diphosphate-binding residues include His-57 and His-90. Position 112 (Cys-112) interacts with [4Fe-4S] cluster. Position 140 (His-140) interacts with (2E)-4-hydroxy-3-methylbut-2-enyl diphosphate. His-140 is a binding site for dimethylallyl diphosphate. His-140 contacts isopentenyl diphosphate. Glu-142 serves as the catalytic Proton donor. Thr-180 contacts (2E)-4-hydroxy-3-methylbut-2-enyl diphosphate. Cys-210 provides a ligand contact to [4Fe-4S] cluster. Residues Ser-238, Ser-239, Asn-240, and Ser-282 each contribute to the (2E)-4-hydroxy-3-methylbut-2-enyl diphosphate site. The dimethylallyl diphosphate site is built by Ser-238, Ser-239, Asn-240, and Ser-282. Positions 238, 239, 240, and 282 each coordinate isopentenyl diphosphate.

The protein belongs to the IspH family. Requires [4Fe-4S] cluster as cofactor.

It catalyses the reaction isopentenyl diphosphate + 2 oxidized [2Fe-2S]-[ferredoxin] + H2O = (2E)-4-hydroxy-3-methylbut-2-enyl diphosphate + 2 reduced [2Fe-2S]-[ferredoxin] + 2 H(+). It carries out the reaction dimethylallyl diphosphate + 2 oxidized [2Fe-2S]-[ferredoxin] + H2O = (2E)-4-hydroxy-3-methylbut-2-enyl diphosphate + 2 reduced [2Fe-2S]-[ferredoxin] + 2 H(+). It functions in the pathway isoprenoid biosynthesis; dimethylallyl diphosphate biosynthesis; dimethylallyl diphosphate from (2E)-4-hydroxy-3-methylbutenyl diphosphate: step 1/1. It participates in isoprenoid biosynthesis; isopentenyl diphosphate biosynthesis via DXP pathway; isopentenyl diphosphate from 1-deoxy-D-xylulose 5-phosphate: step 6/6. In terms of biological role, catalyzes the conversion of 1-hydroxy-2-methyl-2-(E)-butenyl 4-diphosphate (HMBPP) into a mixture of isopentenyl diphosphate (IPP) and dimethylallyl diphosphate (DMAPP). Acts in the terminal step of the DOXP/MEP pathway for isoprenoid precursor biosynthesis. This is 4-hydroxy-3-methylbut-2-enyl diphosphate reductase from Ralstonia nicotianae (strain ATCC BAA-1114 / GMI1000) (Ralstonia solanacearum).